A 429-amino-acid polypeptide reads, in one-letter code: Ribosomal RNA small subunit methyltransferase B (429 aa).

Residues 254–260, Asp277, Asp303, and Asp322 each bind S-adenosyl-L-methionine; that span reads CAAPGGK. Cys375 serves as the catalytic Nucleophile.

The protein belongs to the class I-like SAM-binding methyltransferase superfamily. RsmB/NOP family.

It is found in the cytoplasm. It carries out the reaction cytidine(967) in 16S rRNA + S-adenosyl-L-methionine = 5-methylcytidine(967) in 16S rRNA + S-adenosyl-L-homocysteine + H(+). Its function is as follows. Specifically methylates the cytosine at position 967 (m5C967) of 16S rRNA. The protein is Ribosomal RNA small subunit methyltransferase B of Pectobacterium carotovorum subsp. carotovorum (strain PC1).